Consider the following 277-residue polypeptide: Phosphate import ATP-binding protein PstB 2 (277 aa).

In terms of domain architecture, ABC transporter spans 31–272; that stretch reads IEVPGLNLFY…PAKKQTEDYI (242 aa). 63–70 contributes to the ATP binding site; the sequence is GPSGCGKS.

Belongs to the ABC transporter superfamily. Phosphate importer (TC 3.A.1.7) family. As to quaternary structure, the complex is composed of two ATP-binding proteins (PstB), two transmembrane proteins (PstC and PstA) and a solute-binding protein (PstS).

It is found in the cell inner membrane. It catalyses the reaction phosphate(out) + ATP + H2O = ADP + 2 phosphate(in) + H(+). Functionally, part of the ABC transporter complex PstSACB involved in phosphate import. Responsible for energy coupling to the transport system. The chain is Phosphate import ATP-binding protein PstB 2 from Pseudomonas savastanoi pv. phaseolicola (strain 1448A / Race 6) (Pseudomonas syringae pv. phaseolicola (strain 1448A / Race 6)).